The following is a 131-amino-acid chain: Large ribosomal subunit protein eL32 (131 aa).

This sequence belongs to the eukaryotic ribosomal protein eL32 family.

This Candida glabrata (strain ATCC 2001 / BCRC 20586 / JCM 3761 / NBRC 0622 / NRRL Y-65 / CBS 138) (Yeast) protein is Large ribosomal subunit protein eL32 (RPL32).